Consider the following 811-residue polypeptide: G-type lectin S-receptor-like serine/threonine-protein kinase LECRK2 (811 aa).

A signal peptide spans Met-1–Ala-23. The region spanning Gln-24 to Gly-153 is the Bulb-type lectin domain. The Extracellular portion of the chain corresponds to Gln-24 to Ser-464. Asn-26, Asn-39, Asn-59, Asn-219, Asn-226, Asn-237, and Asn-242 each carry an N-linked (GlcNAc...) asparagine glycan. Positions Pro-292–Arg-344 constitute an EGF-like; atypical domain. Intrachain disulfides connect Cys-296-Cys-314, Cys-308-Cys-325, Cys-327-Cys-343, Cys-389-Cys-411, and Cys-393-Cys-399. An N-linked (GlcNAc...) asparagine glycan is attached at Asn-321. Positions Cys-352–Pro-436 constitute a PAN domain. Residues Leu-465–Thr-485 traverse the membrane as a helical segment. Residues Tyr-486 to Ala-811 lie on the Cytoplasmic side of the membrane. A Protein kinase domain is found at Gly-521–Val-795. ATP is bound by residues Leu-527–Val-535 and Lys-551. Catalysis depends on Asp-645, which acts as the Proton acceptor.

It belongs to the protein kinase superfamily. Ser/Thr protein kinase family.

The protein resides in the membrane. The catalysed reaction is L-seryl-[protein] + ATP = O-phospho-L-seryl-[protein] + ADP + H(+). The enzyme catalyses L-threonyl-[protein] + ATP = O-phospho-L-threonyl-[protein] + ADP + H(+). Functionally, involved in resistance against the herbivorous insect brown planthopper (N.lugens, BPH). Member of the BPH3 (BPH resistance locus 3) cluster which contains LECRK1, LECRK2 and LECRK3. This is G-type lectin S-receptor-like serine/threonine-protein kinase LECRK2 from Oryza sativa subsp. indica (Rice).